The sequence spans 467 residues: ATP synthase subunit beta (467 aa).

ATP is bound at residue 150–157 (GGAGVGKT).

This sequence belongs to the ATPase alpha/beta chains family. F-type ATPases have 2 components, CF(1) - the catalytic core - and CF(0) - the membrane proton channel. CF(1) has five subunits: alpha(3), beta(3), gamma(1), delta(1), epsilon(1). CF(0) has three main subunits: a(1), b(2) and c(9-12). The alpha and beta chains form an alternating ring which encloses part of the gamma chain. CF(1) is attached to CF(0) by a central stalk formed by the gamma and epsilon chains, while a peripheral stalk is formed by the delta and b chains.

It localises to the cell inner membrane. It catalyses the reaction ATP + H2O + 4 H(+)(in) = ADP + phosphate + 5 H(+)(out). Functionally, produces ATP from ADP in the presence of a proton gradient across the membrane. The catalytic sites are hosted primarily by the beta subunits. This Vibrio alginolyticus protein is ATP synthase subunit beta.